Here is a 559-residue protein sequence, read N- to C-terminus: Glycerol kinase (559 aa).

Residue Thr-20 participates in ADP binding. ATP-binding residues include Thr-20, Ser-21, and Ser-22. Residue Thr-20 participates in sn-glycerol 3-phosphate binding. Arg-24 contacts ADP. Residues Arg-94, Glu-95, and Tyr-148 each coordinate sn-glycerol 3-phosphate. Glycerol contacts are provided by Arg-94, Glu-95, and Tyr-148. Residue Gly-252 participates in beta-D-fructose 1,6-bisphosphate binding. Asp-265 provides a ligand contact to sn-glycerol 3-phosphate. Glycerol is bound by residues Asp-265 and Gln-266. 4 residues coordinate ADP: Thr-287, Gly-332, Gly-433, and Asn-437. ATP-binding residues include Thr-287, Gly-332, and Gly-433. Glu-501 provides a ligand contact to Zn(2+). Residues 532 to 552 (IFCSLPLGFFIVSSVVMLIGA) traverse the membrane as a helical segment.

Belongs to the FGGY kinase family.

The protein resides in the mitochondrion outer membrane. It is found in the nucleus. The protein localises to the cytoplasm. It localises to the cytosol. It carries out the reaction glycerol + ATP = sn-glycerol 3-phosphate + ADP + H(+). Its pathway is polyol metabolism; glycerol degradation via glycerol kinase pathway; sn-glycerol 3-phosphate from glycerol: step 1/1. Kinase that plays a key role in glycerol metabolism, catalyzing its phosphorylation to produce sn-glycerol 3-phosphate. Sn-glycerol 3-phosphate is a crucial intermediate in various metabolic pathways, such as the synthesis of glycerolipids and triglycerides, glycogenesis, glycolysis and gluconeogenesis. The chain is Glycerol kinase from Bos taurus (Bovine).